A 107-amino-acid polypeptide reads, in one-letter code: Universal stress protein B homolog (107 aa).

Helical transmembrane passes span 6–25 and 89–106; these read TILFALMLVTAINVARYVTA and LFILSGSLLVLTTVVAFM.

This sequence belongs to the universal stress protein B family.

Its subcellular location is the cell inner membrane. This is Universal stress protein B homolog from Vibrio cholerae serotype O1 (strain ATCC 39541 / Classical Ogawa 395 / O395).